Here is a 568-residue protein sequence, read N- to C-terminus: DNA mismatch repair protein MutL (568 aa).

Belongs to the DNA mismatch repair MutL/HexB family.

In terms of biological role, this protein is involved in the repair of mismatches in DNA. It is required for dam-dependent methyl-directed DNA mismatch repair. May act as a 'molecular matchmaker', a protein that promotes the formation of a stable complex between two or more DNA-binding proteins in an ATP-dependent manner without itself being part of a final effector complex. The protein is DNA mismatch repair protein MutL of Thermosipho africanus (strain TCF52B).